A 205-amino-acid chain; its full sequence is Molybdenum cofactor guanylyltransferase (205 aa).

GTP-binding positions include 14–16 (LAG), Lys27, Asp77, and Asp107. Position 107 (Asp107) interacts with Mg(2+).

This sequence belongs to the MobA family. As to quaternary structure, monomer. Requires Mg(2+) as cofactor.

It localises to the cytoplasm. It catalyses the reaction Mo-molybdopterin + GTP + H(+) = Mo-molybdopterin guanine dinucleotide + diphosphate. Functionally, transfers a GMP moiety from GTP to Mo-molybdopterin (Mo-MPT) cofactor (Moco or molybdenum cofactor) to form Mo-molybdopterin guanine dinucleotide (Mo-MGD) cofactor. The polypeptide is Molybdenum cofactor guanylyltransferase (Burkholderia ambifaria (strain ATCC BAA-244 / DSM 16087 / CCUG 44356 / LMG 19182 / AMMD) (Burkholderia cepacia (strain AMMD))).